The sequence spans 123 residues: Chondroitin proteoglycan 8 (123 aa).

An N-terminal signal peptide occupies residues 1 to 16; the sequence is MRPFILLALLFSVAIA. Positions 32–123 are disordered; the sequence is SVRRSTRGAD…SGSGDEAPAE (92 aa). Over residues 38-60 the composition is skewed to basic and acidic residues; that stretch reads RGADKKADSSDSSDSNEKDDKVT. 2 O-linked (Xyl...) (chondroitin sulfate) serine glycosylation sites follow: serine 63 and serine 65. Residues 74 to 84 are compositionally biased toward basic and acidic residues; that stretch reads EQLRRVARDVE. Serine 87, serine 93, and serine 114 each carry an O-linked (Xyl...) (chondroitin sulfate) serine glycan.

The polypeptide is Chondroitin proteoglycan 8 (cpg-8) (Caenorhabditis briggsae).